Reading from the N-terminus, the 200-residue chain is MFNIPAVAVSYLIGSLSFAVIVSKYYGMDDPRTYGSGNPGATNVLRSGKKKAAVLTLLGDAAKGLVAVLLARVLQEPLGLSDSAIAAVALAALVGHMWPVFFGFKGGKGVATALGVLLALSPATALVCALIWLVMAFGFKVSSLAALTATIAAPLAALFFMPHLSWIWATLLIALLVLFRHKSNISNLLKGKEGKIGEKR.

The next 5 helical transmembrane spans lie at 2 to 22, 51 to 71, 84 to 104, 114 to 134, and 159 to 179; these read FNIP…AVIV, KAAV…VLLA, AIAA…FFGF, LGVL…IWLV, and FFMP…LVLF.

This sequence belongs to the PlsY family. Probably interacts with PlsX.

Its subcellular location is the cell inner membrane. It catalyses the reaction an acyl phosphate + sn-glycerol 3-phosphate = a 1-acyl-sn-glycero-3-phosphate + phosphate. It functions in the pathway lipid metabolism; phospholipid metabolism. In terms of biological role, catalyzes the transfer of an acyl group from acyl-phosphate (acyl-PO(4)) to glycerol-3-phosphate (G3P) to form lysophosphatidic acid (LPA). This enzyme utilizes acyl-phosphate as fatty acyl donor, but not acyl-CoA or acyl-ACP. In Neisseria meningitidis serogroup C / serotype 2a (strain ATCC 700532 / DSM 15464 / FAM18), this protein is Glycerol-3-phosphate acyltransferase.